Consider the following 351-residue polypeptide: Translation initiation factor eIF2B subunit beta (351 aa).

The protein belongs to the eIF-2B alpha/beta/delta subunits family. In terms of assembly, component of the translation initiation factor 2B (eIF2B) complex which is a heterodecamer of two sets of five different subunits: alpha, beta, gamma, delta and epsilon. Subunits alpha, beta and delta comprise a regulatory subcomplex and subunits epsilon and gamma comprise a catalytic subcomplex. Within the complex, the hexameric regulatory complex resides at the center, with the two heterodimeric catalytic subcomplexes bound on opposite sides.

It is found in the cytoplasm. It localises to the cytosol. With respect to regulation, activated by the chemical integrated stress response (ISR) inhibitor ISRIB which stimulates guanine nucleotide exchange factor activity for both phosphorylated and unphosphorylated eIF2. In terms of biological role, acts as a component of the translation initiation factor 2B (eIF2B) complex, which catalyzes the exchange of GDP for GTP on eukaryotic initiation factor 2 (eIF2) gamma subunit. Its guanine nucleotide exchange factor activity is repressed when bound to eIF2 complex phosphorylated on the alpha subunit, thereby limiting the amount of methionyl-initiator methionine tRNA available to the ribosome and consequently global translation is repressed. This Bos taurus (Bovine) protein is Translation initiation factor eIF2B subunit beta (EIF2B2).